The following is a 658-amino-acid chain: Interferon-induced GTP-binding protein Mx1 (658 aa).

At methionine 1 the chain carries N-acetylmethionine. Residues 1-20 are disordered; the sequence is MVNSKGKITDSDPGSSHLLL. Residues 65 to 338 form the Dynamin-type G domain; that stretch reads DLALPAIAVI…LITHICKTLP (274 aa). The tract at residues 75–82 is G1 motif; sequence GDQSSGKS. Position 75 to 82 (75 to 82) interacts with GTP; the sequence is GDQSSGKS. The interval 100 to 102 is G2 motif; sequence VTR. Residues 176 to 179 are G3 motif; sequence DLPG. Residues 176-180 and 245-248 each bind GTP; these read DLPGI and TKPD. The segment at 245-248 is G4 motif; it reads TKPD. Residues 277-280 are G5 motif; the sequence is KCRG. The bundle signaling element (BSE) stretch occupies residues 339–364; the sequence is LLEKQIKENYEKITEELQKYGSDVPE. The tract at residues 364 to 531 is middle domain; the sequence is EEEHEKMFFL…HFQMEQIVYC (168 aa). Residues 365-628 form a stalk region; it reads EEHEKMFFLI…KDTHNWLLKE (264 aa). The tract at residues 551–554 is critical for lipid-binding; sequence KDKK. Residues 570 to 658 form the GED domain; that stretch reads LSDIFEHLLA…ARRRLAKFPG (89 aa).

Belongs to the TRAFAC class dynamin-like GTPase superfamily. Dynamin/Fzo/YdjA family. In terms of assembly, homooligomer. Oligomerizes into multimeric filamentous or ring-like structures by virtue of its stalk domain. Oligomerization is critical for GTPase activity, protein stability, and recognition of viral target structures. Interacts with TRPC1, TRPC3, TRPC4, TRPC5, TRPC6 and TRPC7. Interacts with HSPA5. Interacts with TUBB/TUBB5. Interacts with DDX39A and DDX39B. Post-translationally, ISGylated.

It is found in the cytoplasm. Its subcellular location is the endoplasmic reticulum membrane. It localises to the perinuclear region. Its function is as follows. Interferon-induced dynamin-like GTPase with antiviral activity. This is Interferon-induced GTP-binding protein Mx1 (MX1) from Otaria byronia (South American sea lion).